Reading from the N-terminus, the 676-residue chain is UvrABC system protein B (676 aa).

The 386-residue stretch at 39 to 424 (RGILDGIPSQ…RGHIIEQIIR (386 aa)) folds into the Helicase ATP-binding domain. 52-59 (GTTGSGKT) provides a ligand contact to ATP. The Beta-hairpin motif lies at 105 to 128 (YYDYYQPEAYIARSDTYIEKSLLI). The region spanning 441–604 (QIDDLLEEIR…ITPKPIIKPI (164 aa)) is the Helicase C-terminal domain. The interval 611–631 (KEGAQEDSRPETQSTEDLESS) is disordered. Residues 629–664 (ESSIKQYEEAMYKAAQDFQFDEAAKYRDLMNAAKRQ) form the UVR domain.

The protein belongs to the UvrB family. In terms of assembly, forms a heterotetramer with UvrA during the search for lesions. Interacts with UvrC in an incision complex.

It is found in the cytoplasm. Functionally, the UvrABC repair system catalyzes the recognition and processing of DNA lesions. A damage recognition complex composed of 2 UvrA and 2 UvrB subunits scans DNA for abnormalities. Upon binding of the UvrA(2)B(2) complex to a putative damaged site, the DNA wraps around one UvrB monomer. DNA wrap is dependent on ATP binding by UvrB and probably causes local melting of the DNA helix, facilitating insertion of UvrB beta-hairpin between the DNA strands. Then UvrB probes one DNA strand for the presence of a lesion. If a lesion is found the UvrA subunits dissociate and the UvrB-DNA preincision complex is formed. This complex is subsequently bound by UvrC and the second UvrB is released. If no lesion is found, the DNA wraps around the other UvrB subunit that will check the other stand for damage. In Chlamydia muridarum (strain MoPn / Nigg), this protein is UvrABC system protein B.